The following is a 135-amino-acid chain: Large ribosomal subunit protein uL18c (135 aa).

The protein belongs to the universal ribosomal protein uL18 family. Part of the 50S ribosomal subunit; contacts the 5S rRNA.

It localises to the plastid. The protein resides in the chloroplast. Its function is as follows. Binds 5S rRNA, forms part of the central protuberance of the 50S subunit. This is Large ribosomal subunit protein uL18c (rpl18) from Phaeodactylum tricornutum (strain CCAP 1055/1).